A 247-amino-acid chain; its full sequence is 3-deoxy-manno-octulosonate cytidylyltransferase (247 aa).

Belongs to the KdsB family.

The protein resides in the cytoplasm. It catalyses the reaction 3-deoxy-alpha-D-manno-oct-2-ulosonate + CTP = CMP-3-deoxy-beta-D-manno-octulosonate + diphosphate. It participates in nucleotide-sugar biosynthesis; CMP-3-deoxy-D-manno-octulosonate biosynthesis; CMP-3-deoxy-D-manno-octulosonate from 3-deoxy-D-manno-octulosonate and CTP: step 1/1. The protein operates within bacterial outer membrane biogenesis; lipopolysaccharide biosynthesis. Functionally, activates KDO (a required 8-carbon sugar) for incorporation into bacterial lipopolysaccharide in Gram-negative bacteria. The chain is 3-deoxy-manno-octulosonate cytidylyltransferase from Chlorobium phaeovibrioides (strain DSM 265 / 1930) (Prosthecochloris vibrioformis (strain DSM 265)).